A 214-amino-acid chain; its full sequence is Ribosomal RNA small subunit methyltransferase G (214 aa).

Residues Gly-77, Phe-82, 128–129 (VE), and Arg-143 contribute to the S-adenosyl-L-methionine site.

It belongs to the methyltransferase superfamily. RNA methyltransferase RsmG family.

The protein resides in the cytoplasm. The enzyme catalyses guanosine(527) in 16S rRNA + S-adenosyl-L-methionine = N(7)-methylguanosine(527) in 16S rRNA + S-adenosyl-L-homocysteine. Specifically methylates the N7 position of guanine in position 527 of 16S rRNA. The polypeptide is Ribosomal RNA small subunit methyltransferase G (Nitrosomonas europaea (strain ATCC 19718 / CIP 103999 / KCTC 2705 / NBRC 14298)).